The chain runs to 549 residues: Cytochrome c oxidase subunit 1 (549 aa).

Residues 18 to 38 form a helical membrane-spanning segment; the sequence is LCYLLVAILSGFVGYVYSLFI. The Ca(2+) site is built by Glu41 and Gly46. Residues 42–62 form a helical membrane-spanning segment; the sequence is LSLIGCGILFGDYQFYNVLIT. Residue His64 participates in Fe(II)-heme a binding. The next 5 membrane-spanning stretches (helical) occupy residues 66–86, 100–120, 148–168, 186–206, and 222–242; these read LIMV…NYFI, LNNM…NGFL, FVMF…INLL, LFIW…PVLA, and FYDV…WFFG. Residue His243 coordinates Cu cation. The segment at residues 243-247 is a cross-link (1'-histidyl-3'-tyrosine (His-Tyr)); that stretch reads HPEVY. Helical transmembrane passes span 246 to 266 and 269 to 289; these read VYII…VIGF and VFST…GMFV. Residue Tyr247 participates in O2 binding. The Cu cation site is built by His292 and His293. Helical transmembrane passes span 306 to 326 and 340 to 360; these read YFGG…FNWI and VYFV…GLFL. Residues His370 and Asp371 each contribute to the Mg(2+) site. Residue His378 coordinates heme a3. 5 consecutive transmembrane segments (helical) span residues 379-399, 402-422, 460-480, 484-504, and 520-540; these read FHYV…IHFL, WLPI…LFIG, MLLL…FLFW, LFFV…STWL, and IVLD…IFFW. His380 lines the Fe(II)-heme a pocket.

The protein belongs to the heme-copper respiratory oxidase family. Component of the cytochrome c oxidase (complex IV, CIV), a multisubunit enzyme composed of a catalytic core of 3 subunits and several supernumerary subunits. The complex exists as a monomer or a dimer and forms supercomplexes (SCs) in the inner mitochondrial membrane with ubiquinol-cytochrome c oxidoreductase (cytochrome b-c1 complex, complex III, CIII). Heme serves as cofactor. The cofactor is Cu cation.

The protein resides in the mitochondrion inner membrane. It carries out the reaction 4 Fe(II)-[cytochrome c] + O2 + 8 H(+)(in) = 4 Fe(III)-[cytochrome c] + 2 H2O + 4 H(+)(out). Its pathway is energy metabolism; oxidative phosphorylation. Its function is as follows. Component of the cytochrome c oxidase, the last enzyme in the mitochondrial electron transport chain which drives oxidative phosphorylation. The respiratory chain contains 3 multisubunit complexes succinate dehydrogenase (complex II, CII), ubiquinol-cytochrome c oxidoreductase (cytochrome b-c1 complex, complex III, CIII) and cytochrome c oxidase (complex IV, CIV), that cooperate to transfer electrons derived from NADH and succinate to molecular oxygen, creating an electrochemical gradient over the inner membrane that drives transmembrane transport and the ATP synthase. Cytochrome c oxidase is the component of the respiratory chain that catalyzes the reduction of oxygen to water. Electrons originating from reduced cytochrome c in the intermembrane space (IMS) are transferred via the dinuclear copper A center (CU(A)) of subunit 2 and heme A of subunit 1 to the active site in subunit 1, a binuclear center (BNC) formed by heme A3 and copper B (CU(B)). The BNC reduces molecular oxygen to 2 water molecules using 4 electrons from cytochrome c in the IMS and 4 protons from the mitochondrial matrix. The protein is Cytochrome c oxidase subunit 1 (COI) of Leishmania tarentolae (Sauroleishmania tarentolae).